The sequence spans 793 residues: 3',5'-cyclic-nucleotide phosphodiesterase regA (793 aa).

The interval 1–153 (MNNKQEEIDQ…SSHRVSDFSD (153 aa)) is disordered. Low complexity-rich tracts occupy residues 13–34 (SSTS…DSTS), 54–69 (NKNN…SNNN), and 80–121 (NNSS…NNNN). The 120-residue stretch at 161–280 (RILVADDDDV…LLKKKIDTVL (120 aa)) folds into the Response regulatory domain. Position 212 is a 4-aspartylphosphate (aspartate 212). The PDEase domain occupies 410-733 (RRNSIPTFPQ…ENWQAYMELQ (324 aa)). Histidine 487 (proton donor) is an active-site residue. Residues histidine 491, histidine 527, aspartate 528, and aspartate 639 each coordinate a divalent metal cation. Residues 756 to 793 (KLPKIDEEENRDKVSSSSSSSTAPLTSTSSSNNETSSS) form a disordered region. Low complexity predominate over residues 770-793 (SSSSSSSTAPLTSTSSSNNETSSS).

It belongs to the cyclic nucleotide phosphodiesterase family. A divalent metal cation is required as a cofactor. Post-translationally, the phosphorelay mechanism involves the sequential transfer of a phosphate group from Asp-212 of pde2 to 'His-65' of rdeA. Phosphorylation of Asp-212 activates the phosphodiesterase domain.

It localises to the cytoplasm. It is found in the cytosol. It catalyses the reaction 3',5'-cyclic AMP + H2O = AMP + H(+). Its activity is regulated as follows. Inhibited by 3-isobutyl-1-methylxanthine (IBMX). Its function is as follows. Phosphodiesterase specific for cAMP. Involved in the degradation of intracellular cAMP. Morphological suppressor of tagB. Phosphorelay protein that accepts phosphate from rdeA or supplies phosphate from regA; depending on the relative concentration of the phosphodonor proteins. The sequence is that of 3',5'-cyclic-nucleotide phosphodiesterase regA (regA) from Dictyostelium discoideum (Social amoeba).